Here is a 385-residue protein sequence, read N- to C-terminus: Putative nickel insertion protein (385 aa).

Belongs to the LarC family.

The sequence is that of Putative nickel insertion protein from Geobacter sp. (strain M21).